Reading from the N-terminus, the 1721-residue chain is MAQFPTPFGGSLDIWAITVEERAKHDQQFHSLKPISGFITGDQARNFFFQSGLPQPVLAQIWALADMNNDGRMDQVEFSIAMKLIKLKLQGYQLPSALPPVMKQQPVAISSAPAFGMGGIASMPPLTAVAPVPMGSIPVVGMSPTLVSSVPTAAVPPLANGAPPVIQPLPAFAHPAATLPKSSSFSRSGPGSQLNTKLQKAQSFDVASVPPVAEWAVPQSSRLKYRQLFNSHDKTMSGHLTGPQARTILMQSSLPQAQLASIWNLSDIDQDGKLTAEEFILAMHLIDVAMSGQPLPPVLPPEYIPPSFRRVRSGSGISVISSTSVDQRLPEEPVLEDEQQQLEKKLPVTFEDKKRENFERGNLELEKRRQALLEQQRKEQERLAQLERAEQERKERERQEQERKRQLELEKQLEKQRELERQREEERRKEIERREAAKRELERQRQLEWERNRRQELLNQRNKEQEDIVVLKAKKKTLEFELEALNDKKHQLEGKLQDIRCRLTTQRQEIESTNKSRELRIAEITHLQQQLQESQQMLGRLIPEKQILNDQLKQVQQNSLHRDSLVTLKRALEAKELARQHLRDQLDEVEKETRSKLQEIDIFNNQLKELREIHNKQQLQKQKSMEAERLKQKEQERKIIELEKQKEEAQRRAQERDKQWLEHVQQEDEHQRPRKLHEEEKLKREESVKKKDGEEKGKQEAQDKLGRLFHQHQEPAKPAVQAPWSTAEKGPLTISAQENVKVVYYRALYPFESRSHDEITIQPGDIVMVKGEWVDESQTGEPGWLGGELKGKTGWFPANYAEKIPENEVPAPVKPVTDSTSAPAPKLALRETPAPLAVTSSEPSTTPNNWADFSSTWPTSTNEKPETDNWDAWAAQPSLTVPSAGQLRQRSAFTPATATGSSPSPVLGQGEKVEGLQAQALYPWRAKKDNHLNFNKNDVITVLEQQDMWWFGEVQGQKGWFPKSYVKLISGPIRKSTSMDSGSSESPASLKRVASPAAKPVVSGEEFIAMYTYESSEQGDLTFQQGDVILVTKKDGDWWTGTVGDKAGVFPSNYVRLKDSEGSGTAGKTGSLGKKPEIAQVIASYTATGPEQLTLAPGQLILIRKKNPGGWWEGELQARGKKRQIGWFPANYVKLLSPGTSKITPTEPPKSTALAAVCQVIGMYDYTAQNDDELAFNKGQIINVLNKEDPDWWKGEVNGQVGLFPSNYVKLTTDMDPSQQWCSDLHLLDMLTPTERKRQGYIHELIVTEENYVNDLQLVTEIFQKPLMESELLTEKEVAMIFVNWKELIMCNIKLLKALRVRKKMSGEKMPVKMIGDILSAQLPHMQPYIRFCSRQLNGAALIQQKTDEAPDFKEFVKRLAMDPRCKGMPLSSFILKPMQRVTRYPLIIKNILENTPENHPDHSHLKHALEKAEELCSQVNEGVREKENSDRLEWIQAHVQCEGLSEQLVFNSVTNCLGPRKFLHSGKLYKAKSNKELYGFLFNDFLLLTQITKPLGSSGTDKVFSPKSNLQYKMYKTPIFLNEVLVKLPTDPSGDEPIFHISHIDRVYTLRAESINERTAWVQKIKAASELYIETEKKKREKAYLVRSQRATGIGRLMVNVVEGIELKPCRSHGKSNPYCEVTMGSQCHITKTIQDTLNPKWNSNCQFFIRDLEQEVLCITVFERDQFSPDDFLGRTEIRVADIKKDQGSKGPVTKCLLLHEVPTGEIVVRLDLQLFDEP.

One can recognise an EH 1 domain in the interval 21 to 109 (ERAKHDQQFH…PVMKQQPVAI (89 aa)). In terms of domain architecture, EF-hand 1 spans 53–88 (LPQPVLAQIWALADMNNDGRMDQVEFSIAMKLIKLK). Residues Asp-66, Asn-68, Asp-70, Arg-72, and Glu-77 each contribute to the Ca(2+) site. Ser-203 is subject to Phosphoserine. The 90-residue stretch at 221–310 (SRLKYRQLFN…PEYIPPSFRR (90 aa)) folds into the EH 2 domain. Residues 254–289 (LPQAQLASIWNLSDIDQDGKLTAEEFILAMHLIDVA) enclose the EF-hand 2 domain. Ca(2+) contacts are provided by Asp-267, Asp-269, Asp-271, Lys-273, and Glu-278. Ser-318 carries the post-translational modification Phosphoserine. Disordered stretches follow at residues 322–348 (STSV…KLPV) and 650–701 (QRRA…KQEA). Residues 326-702 (DQRLPEEPVL…GEEKGKQEAQ (377 aa)) are KLERQ. A coiled-coil region spans residues 355-659 (RENFERGNLE…QRRAQERDKQ (305 aa)). At Ser-687 the chain carries Phosphoserine. Residues 740-806 (VKVVYYRALY…PANYAEKIPE (67 aa)) enclose the SH3 1 domain. The interval 836–868 (LAVTSSEPSTTPNNWADFSSTWPTSTNEKPETD) is disordered. A compositionally biased stretch (polar residues) spans 838-862 (VTSSEPSTTPNNWADFSSTWPTSTN). Thr-897 carries the phosphothreonine modification. Phosphoserine is present on residues Ser-901, Ser-902, and Ser-904. The SH3 2 domain occupies 913-971 (VEGLQAQALYPWRAKKDNHLNFNKNDVITVLEQQDMWWFGEVQGQKGWFPKSYVKLISG). Phosphoserine occurs at positions 978, 986, and 995. SH3 domains are found at residues 1002–1060 (VSGE…LKDS) and 1074–1138 (KKPE…LLSP). The required for interaction with FCHSD2 stretch occupies residues 1074–1138 (KKPEIAQVIA…PANYVKLLSP (65 aa)). Positions 1104–1127 (RKKNPGGWWEGELQARGKKRQIGW) match the Bipartite nuclear localization signal; in isoform 2 motif. Ser-1137 is subject to Phosphoserine. Residue Thr-1144 is modified to Phosphothreonine. The 60-residue stretch at 1155 to 1214 (AAVCQVIGMYDYTAQNDDELAFNKGQIINVLNKEDPDWWKGEVNGQVGLFPSNYVKLTTD) folds into the SH3 5 domain. A DH domain is found at 1237–1423 (KRQGYIHELI…EELCSQVNEG (187 aa)). The PH domain maps to 1462–1571 (KFLHSGKLYK…WVQKIKAASE (110 aa)). The region spanning 1579 to 1695 (KKREKAYLVR…KKDQGSKGPV (117 aa)) is the C2 domain. Ser-1645 carries the post-translational modification Phosphoserine. Ca(2+) is bound by residues Asp-1667, Ser-1670, and Asp-1673.

Interacts (via DH domain) with CDC42. Interacts (via SH3 domain 1) with WASL. Interacts with dynamin, SNAP25 and SNAP23. Interacts with clathrin-associated proteins and other components of the endocytic machinery, such as SPIN90, EPS15, EPN1, EPN2, STON2, FCHO1, FCHO2 and DAB2. Interacts (via SH3 domains) with REPS1 and SGIP1. Interacts with ARHGAP31. Interacts with ADAM15. Interacts with PRRT2. Interacts (via SH3 domain 4) with FCHSD2 (via SH3 domain 2). Interacts (via SH3 domain 1) with DENND2B. Interacts (via SH3 domains) with CBL. Isoform 2: Interacts with CBL and DNM1. Isoform 2: Interacts with LMNA. Isoform 2: Interacts with importin subunit KPNA1; this is likely to mediate its import into the nucleus. Interacts with DNM2. In terms of assembly, (Microbial infection) Interacts with vaccinia virus protein A36. Ca(2+) serves as cofactor. As to expression, isoform 1 is expressed almost exclusively in the brain. Isoform 2 is detected in brain, spleen, lung, liver, heart, skeletal muscle and kidney. Isoform 5 is primarily expressed in brain, spleen, lung and kidney (at protein level). Isoform 1 and isoform 2 are detected in brain. Isoform 2 is ubiquitous in adult and fetal tissues with high expression in skeletal muscle, heart, spleen, ovary, testis and all fetal tissues tested and low expression in thymus, blood, lung, liver and pancreas. Isoform 1 is expressed almost exclusively in the brain, in all brain regions. Not expressed in the spinal cord.

Its subcellular location is the endomembrane system. It localises to the synapse. The protein localises to the synaptosome. The protein resides in the cell projection. It is found in the lamellipodium. Its subcellular location is the cell membrane. It localises to the membrane. The protein localises to the clathrin-coated pit. The protein resides in the recycling endosome. It is found in the endosome. Its subcellular location is the cytoplasmic vesicle. It localises to the cytoplasm. The protein localises to the nucleus envelope. Its function is as follows. Adapter protein that provides a link between the endocytic membrane traffic and the actin assembly machinery. Acts as a guanine nucleotide exchange factor (GEF) for CDC42, and thereby stimulates actin nucleation mediated by WASL and the ARP2/3 complex. Plays a role in the assembly and maturation of clathrin-coated vesicles. Recruits FCHSD2 to clathrin-coated pits. Involved in endocytosis of activated EGFR, and probably also other growth factor receptors. Involved in endocytosis of integrin beta-1 (ITGB1) and transferrin receptor (TFR); internalization of ITGB1 as DAB2-dependent cargo but not TFR may involve association with DAB2. Promotes ubiquitination and subsequent degradation of EGFR, and thereby contributes to the down-regulation of EGFR-dependent signaling pathways. In chromaffin cells, required for normal exocytosis of catecholamines. Required for rapid replenishment of release-ready synaptic vesicles at presynaptic active zones. Inhibits ARHGAP31 activity toward RAC1. In terms of biological role, plays a role in synaptic vesicle endocytosis in brain neurons. The protein is Intersectin-1 of Homo sapiens (Human).